Reading from the N-terminus, the 354-residue chain is Phenylalanine--tRNA ligase alpha subunit (354 aa).

E279 is a binding site for Mg(2+).

Belongs to the class-II aminoacyl-tRNA synthetase family. Phe-tRNA synthetase alpha subunit type 1 subfamily. In terms of assembly, tetramer of two alpha and two beta subunits. The cofactor is Mg(2+).

The protein resides in the cytoplasm. It carries out the reaction tRNA(Phe) + L-phenylalanine + ATP = L-phenylalanyl-tRNA(Phe) + AMP + diphosphate + H(+). This is Phenylalanine--tRNA ligase alpha subunit from Cupriavidus pinatubonensis (strain JMP 134 / LMG 1197) (Cupriavidus necator (strain JMP 134)).